The sequence spans 117 residues: UPF0342 protein LBUL_1430 (117 aa).

This sequence belongs to the UPF0342 family.

In Lactobacillus delbrueckii subsp. bulgaricus (strain ATCC BAA-365 / Lb-18), this protein is UPF0342 protein LBUL_1430.